Reading from the N-terminus, the 1056-residue chain is Kinesin-like protein KIF11 (1056 aa).

The 342-residue stretch at 18–359 (NIQVVVRCRP…LEYAHRAKNI (342 aa)) folds into the Kinesin motor domain. An ATP-binding site is contributed by 105–112 (GQTGTGKT). N6-acetyllysine is present on K146. Coiled-coil stretches lie at residues 364–480 (EVNQ…KEEY) and 736–763 (LEEK…DIVN). Residue T458 is modified to Phosphothreonine. Residue K477 forms a Glycyl lysine isopeptide (Lys-Gly) (interchain with G-Cter in SUMO2) linkage. T925 carries the post-translational modification Phosphothreonine. At T926 the chain carries Phosphothreonine; by CDK1. At S1033 the chain carries Phosphoserine; by NEK6. Residue K1034 forms a Glycyl lysine isopeptide (Lys-Gly) (interchain with G-Cter in ubiquitin) linkage.

It belongs to the TRAFAC class myosin-kinesin ATPase superfamily. Kinesin family. BimC subfamily. As to quaternary structure, interacts with the thyroid hormone receptor in the presence of thyroid hormone. Component of a large chromatin remodeling complex, at least composed of MYSM1, PCAF, RBM10 and KIF11/TRIP5. Interacts (via C-terminus) with the kinase NEK6 in both interphase and mitosis. Interacts with RARRES1 and AGBL2. Interacts with TPX2. Post-translationally, phosphorylated exclusively on serine during S phase, but on both serine and Thr-926 during mitosis, so controlling the association of KIF11 with the spindle apparatus (probably during early prophase). A subset of this protein primarily localized at the spindle pole is phosphorylated by NEK6 during mitosis; phosphorylation is required for mitotic function. In terms of processing, ubiquitinated at Lys-1034 by UHRF1 via 'Lys-63'-linked ubiquitin chains, leading to interaction with spindle assembly factor TPX2, thereby ensuring accurate distribution to the spindles during metaphase.

It is found in the cytoplasm. It localises to the cytoskeleton. Its subcellular location is the spindle pole. Motor protein required for establishing a bipolar spindle and thus contributing to chromosome congression during mitosis. Required in non-mitotic cells for transport of secretory proteins from the Golgi complex to the cell surface. This Homo sapiens (Human) protein is Kinesin-like protein KIF11 (KIF11).